Here is a 267-residue protein sequence, read N- to C-terminus: Very long chain fatty acid elongase 6 (267 aa).

N-linked (GlcNAc...) asparagine glycosylation is present at Asn2. 7 consecutive transmembrane segments (helical) span residues Phe34–Met51, Leu70–Met90, Phe111–Ile131, Lys136–Tyr156, Met159–Ser179, Phe197–Phe217, and Ile234–Glu254.

Belongs to the ELO family. ELOVL6 subfamily. Post-translationally, N-Glycosylated. As to expression, highly expressed in adrenal gland, liver, white adipose tissue (WAT), adult and fetal brain, cerebellum, spinal cord, testis, skin and peripheral nerve; where lipogenesis and steroidogenesis are active. Weakly expressed in kidney, heart, skeletal muscle, lung, and spleen.

Its subcellular location is the endoplasmic reticulum membrane. The enzyme catalyses a very-long-chain acyl-CoA + malonyl-CoA + H(+) = a very-long-chain 3-oxoacyl-CoA + CO2 + CoA. It catalyses the reaction hexadecanoyl-CoA + malonyl-CoA + H(+) = 3-oxooctadecanoyl-CoA + CO2 + CoA. The catalysed reaction is (9Z)-hexadecenoyl-CoA + malonyl-CoA + H(+) = 3-oxo-(11Z)-octadecenoyl-CoA + CO2 + CoA. It carries out the reaction dodecanoyl-CoA + malonyl-CoA + H(+) = 3-oxotetradecanoyl-CoA + CO2 + CoA. The enzyme catalyses tetradecanoyl-CoA + malonyl-CoA + H(+) = 3-oxohexadecanoyl-CoA + CO2 + CoA. It catalyses the reaction (9Z)-octadecenoyl-CoA + malonyl-CoA + H(+) = 3-oxo-(11Z)-eicosenoyl-CoA + CO2 + CoA. The catalysed reaction is (9Z,12Z)-octadecadienoyl-CoA + malonyl-CoA + H(+) = (11Z,14Z)-3-oxoicosa-11,14-dienoyl-CoA + CO2 + CoA. It carries out the reaction (9Z,12Z,15Z)-octadecatrienoyl-CoA + malonyl-CoA + H(+) = (11Z,14Z,17Z)-3-oxoeicosatrienoyl-CoA + CO2 + CoA. The protein operates within lipid metabolism; fatty acid biosynthesis. With respect to regulation, the reaction is stimulated by the presence of HSD17B12, the enzyme catalyzing the second step of the elongation cycle. In terms of biological role, catalyzes the first and rate-limiting reaction of the four reactions that constitute the long-chain fatty acids elongation cycle. This endoplasmic reticulum-bound enzymatic process allows the addition of 2 carbons to the chain of long- and very long-chain fatty acids (VLCFAs) per cycle. Condensing enzyme that elongates fatty acids with 12, 14 and 16 carbons with higher activity toward C16:0 acyl-CoAs. Catalyzes the synthesis of unsaturated C16 long chain fatty acids and, to a lesser extent, C18:0 and those with low desaturation degree. May participate in the production of saturated and monounsaturated VLCFAs of different chain lengths that are involved in multiple biological processes as precursors of membrane lipids and lipid mediators. The polypeptide is Very long chain fatty acid elongase 6 (Mus musculus (Mouse)).